The primary structure comprises 83 residues: Cytochrome b559 subunit alpha (83 aa).

A helical membrane pass occupies residues 21-35 (VIHSITIPSLFIAGW). Residue H23 coordinates heme.

Belongs to the PsbE/PsbF family. In terms of assembly, heterodimer of an alpha subunit and a beta subunit. PSII is composed of 1 copy each of membrane proteins PsbA, PsbB, PsbC, PsbD, PsbE, PsbF, PsbH, PsbI, PsbJ, PsbK, PsbL, PsbM, PsbT, PsbX, PsbY, PsbZ, Psb30/Ycf12, at least 3 peripheral proteins of the oxygen-evolving complex and a large number of cofactors. It forms dimeric complexes. The cofactor is heme b.

The protein localises to the plastid. The protein resides in the chloroplast thylakoid membrane. This b-type cytochrome is tightly associated with the reaction center of photosystem II (PSII). PSII is a light-driven water:plastoquinone oxidoreductase that uses light energy to abstract electrons from H(2)O, generating O(2) and a proton gradient subsequently used for ATP formation. It consists of a core antenna complex that captures photons, and an electron transfer chain that converts photonic excitation into a charge separation. This Panax ginseng (Korean ginseng) protein is Cytochrome b559 subunit alpha.